A 419-amino-acid polypeptide reads, in one-letter code: Probable serine/threonine-protein kinase DDB_G0290859 (419 aa).

The 348-residue stretch at 40–387 folds into the Protein kinase domain; it reads YDIISTIGSG…ASTIKKHPFF (348 aa). Residues 46–54 and lysine 69 contribute to the ATP site; that span reads IGSGSYGEV. Aspartate 173 serves as the catalytic Proton acceptor. Positions 388 to 419 constitute an AGC-kinase C-terminal domain; it reads EGINWEEMANFNVEPPFKPTLSSDDDISYFTN.

This sequence belongs to the protein kinase superfamily. AGC Ser/Thr protein kinase family.

The catalysed reaction is L-seryl-[protein] + ATP = O-phospho-L-seryl-[protein] + ADP + H(+). It catalyses the reaction L-threonyl-[protein] + ATP = O-phospho-L-threonyl-[protein] + ADP + H(+). This is Probable serine/threonine-protein kinase DDB_G0290859 from Dictyostelium discoideum (Social amoeba).